A 229-amino-acid polypeptide reads, in one-letter code: Cytochrome b translational activator protein CBS1, mitochondrial (229 aa).

The N-terminal 25 residues, 1–25 (MLRTKVFATTVARISGIRRYIPIRT), are a transit peptide targeting the mitochondrion.

It localises to the mitochondrion inner membrane. In terms of biological role, mRNA-specific translational activator of cytochrome b. The cytochrome b (COB) leader RNA may represent the target sequence for CBS1 and CBS2, tethering the COB mRNA to the inner mitochondrial membrane, where cotranslational insertion of cytochrome b into the membrane can occur. This Saccharomyces cerevisiae (strain ATCC 204508 / S288c) (Baker's yeast) protein is Cytochrome b translational activator protein CBS1, mitochondrial (CBS1).